The chain runs to 291 residues: Pyridoxal kinase PdxY (291 aa).

Substrate-binding positions include serine 9 and threonine 44–glutamine 45. ATP contacts are provided by residues aspartate 112, valine 144, glutamate 149, lysine 182, and arginine 207–leucine 210. Aspartate 221 serves as a coordination point for substrate.

Belongs to the pyridoxine kinase family. PdxY subfamily. In terms of assembly, homodimer. Mg(2+) serves as cofactor.

It catalyses the reaction pyridoxal + ATP = pyridoxal 5'-phosphate + ADP + H(+). Its pathway is cofactor metabolism; pyridoxal 5'-phosphate salvage; pyridoxal 5'-phosphate from pyridoxal: step 1/1. Functionally, pyridoxal kinase involved in the salvage pathway of pyridoxal 5'-phosphate (PLP). Catalyzes the phosphorylation of pyridoxal to PLP. The polypeptide is Pyridoxal kinase PdxY (Photobacterium profundum (strain SS9)).